The following is a 185-amino-acid chain: Ribosome-recycling factor (185 aa).

The protein belongs to the RRF family.

Its subcellular location is the cytoplasm. Responsible for the release of ribosomes from messenger RNA at the termination of protein biosynthesis. May increase the efficiency of translation by recycling ribosomes from one round of translation to another. The sequence is that of Ribosome-recycling factor from Salmonella paratyphi A (strain ATCC 9150 / SARB42).